Consider the following 610-residue polypeptide: Nuclear factor 7, ovary (610 aa).

Residues 21-75 (NVGSTYPCKRSDGSQHDADIVKTRYNKQAGREEYYVHYVGLNRRQNEWVDKSRLV) form the Tudor-knot domain. A disordered region spans residues 79–127 (PPKEVETNGTDQEEMTEPTEQPDSKTPQKRKLEEPEPEPKKAKVEDKDA). Threonine 104 is modified (phosphothreonine; by CDK1). Residues 108-127 (RKLEEPEPEPKKAKVEDKDA) are compositionally biased toward basic and acidic residues. Residues 146 to 186 (CPLCVELFKDPVMVACGHNFCRSCIDKVWEGQSSFACPECK) form an RING-type zinc finger. Residues 220-261 (RPLEKCSEHDERLKLYCKDDGTLGCVICRDSLKHASHNFLPI) form a B box-type zinc finger. Positions 225, 228, 247, and 253 each coordinate Zn(2+). A coiled-coil region spans residues 295–374 (DKIEQHNKNV…AKERMEETDS (80 aa)). The B30.2/SPRY domain occupies 415–610 (PIQYIMWKEL…VDALRFVHNQ (196 aa)).

As to quaternary structure, monomer. As to expression, abundant in oocytes. At the neurula stage, low expression in dorsal embryo region including neural folds and somites.

The protein localises to the nucleus. In terms of biological role, transcription factor that determines dorsal-ventral body axis. The protein is Nuclear factor 7, ovary of Xenopus laevis (African clawed frog).